The primary structure comprises 248 residues: DNA polymerase sliding clamp (248 aa).

The protein belongs to the PCNA family. Homotrimer. The subunits circularize to form a toroid; DNA passes through its center. Replication factor C (RFC) is required to load the toroid on the DNA.

Functionally, sliding clamp subunit that acts as a moving platform for DNA processing. Responsible for tethering the catalytic subunit of DNA polymerase and other proteins to DNA during high-speed replication. The protein is DNA polymerase sliding clamp of Nitrosopumilus maritimus (strain SCM1).